Reading from the N-terminus, the 257-residue chain is Snake venom serine protease KN8 (257 aa).

The signal sequence occupies residues 1-18; that stretch reads MVLIRVLANLLILQLSYA. A propeptide spanning residues 19-24 is cleaved from the precursor; it reads QKSSEL. Residues 25–248 form the Peptidase S1 domain; that stretch reads VVGGLPCNIN…HLDWIKSIIA (224 aa). 5 disulfide bridges follow: C31/C162, C49/C65, C141/C209, C173/C188, and C199/C224. H64 serves as the catalytic Charge relay system. N102 carries N-linked (GlcNAc...) asparagine glycosylation. D109 (charge relay system) is an active-site residue. N-linked (GlcNAc...) asparagine glycosylation is found at N120 and N121. S203 (charge relay system) is an active-site residue.

The protein belongs to the peptidase S1 family. Snake venom subfamily. In terms of assembly, monomer. As to expression, expressed by the venom gland.

The protein localises to the secreted. Snake venom serine protease that may act in the hemostasis system of the prey. The polypeptide is Snake venom serine protease KN8 (Trimeresurus stejnegeri (Chinese green tree viper)).